A 250-amino-acid chain; its full sequence is 1-(5-phosphoribosyl)-5-[(5-phosphoribosylamino)methylideneamino] imidazole-4-carboxamide isomerase (250 aa).

Residue Asp8 is the Proton acceptor of the active site. The active-site Proton donor is Asp129.

It belongs to the HisA/HisF family.

It is found in the cytoplasm. It catalyses the reaction 1-(5-phospho-beta-D-ribosyl)-5-[(5-phospho-beta-D-ribosylamino)methylideneamino]imidazole-4-carboxamide = 5-[(5-phospho-1-deoxy-D-ribulos-1-ylimino)methylamino]-1-(5-phospho-beta-D-ribosyl)imidazole-4-carboxamide. The protein operates within amino-acid biosynthesis; L-histidine biosynthesis; L-histidine from 5-phospho-alpha-D-ribose 1-diphosphate: step 4/9. This Desulfovibrio desulfuricans (strain ATCC 27774 / DSM 6949 / MB) protein is 1-(5-phosphoribosyl)-5-[(5-phosphoribosylamino)methylideneamino] imidazole-4-carboxamide isomerase.